Consider the following 615-residue polypeptide: Ras association domain-containing protein 1 homolog (615 aa).

2 disordered regions span residues 1-29 and 69-89; these read MLRS…PTYQ and SDDE…QSIG. The span at 76–87 shows a compositional bias: low complexity; sequence TSSTSSPQSEQS. The Phorbol-ester/DAG-type zinc-finger motif lies at 164 to 214; that stretch reads NHSFKTHSLLHPTWCDKCGDFIWGILKEALKCEHCNYTCHARCRDLVTLDC. A disordered region spans residues 249–268; the sequence is PAMSSSTGSDKENGNGNSAG. Polar residues predominate over residues 251-268; it reads MSSSTGSDKENGNGNSAG. Positions 396-496 constitute a Ras-associating domain; it reads KTTSLRTITS…RALVLQENDT (101 aa). Residues 498–545 form the SARAH domain; it reads DILWDAFEIPELENFLRILGMEEKQYVFQTQQKYQQYRYHLDAELRQR.

As to quaternary structure, interacts with rab-39 (GTP-bound form). Interacts (via SARAH domain) with cst-1; the interaction is required for the phosphorylation of cst-1. As to expression, expressed in the pharynx, epithelial cells, ciliated neurons in the head, body wall muscles, hypodermis, vulva, gonadal sheath cells, tail hypodermis and in coelomocytes. Expressed in the pharynx, neurons and vulva.

It localises to the cytoplasm. The protein localises to the cytoskeleton. Functionally, involved in embryonic morphogenesis. Plays a role in the organization of apical filamentous actin in epithelial cells of the developing embryo. May play a role in let-60-mediated vulval development. May induce nuclear condensation. Positively regulates the oxidative stress response, and this may be in association with the small GTPase rab-39. Not required for muscle integrity. The chain is Ras association domain-containing protein 1 homolog from Caenorhabditis elegans.